The sequence spans 127 residues: Small ribosomal subunit protein eS8 (127 aa).

It belongs to the eukaryotic ribosomal protein eS8 family. As to quaternary structure, part of the 30S ribosomal subunit.

The chain is Small ribosomal subunit protein eS8 (rps8e) from Pyrococcus horikoshii (strain ATCC 700860 / DSM 12428 / JCM 9974 / NBRC 100139 / OT-3).